The sequence spans 150 residues: Large ribosomal subunit protein uL13 (150 aa).

A disordered region spans residues 130–150; it reads EHPHAAQQPKTLQLDPAASAQ.

This sequence belongs to the universal ribosomal protein uL13 family. As to quaternary structure, part of the 50S ribosomal subunit.

In terms of biological role, this protein is one of the early assembly proteins of the 50S ribosomal subunit, although it is not seen to bind rRNA by itself. It is important during the early stages of 50S assembly. The chain is Large ribosomal subunit protein uL13 from Synechococcus sp. (strain CC9311).